The chain runs to 477 residues: UDP-N-acetylmuramate--L-alanine ligase (477 aa).

118-124 contributes to the ATP binding site; the sequence is GTHGKTS.

The protein belongs to the MurCDEF family.

Its subcellular location is the cytoplasm. It carries out the reaction UDP-N-acetyl-alpha-D-muramate + L-alanine + ATP = UDP-N-acetyl-alpha-D-muramoyl-L-alanine + ADP + phosphate + H(+). It functions in the pathway cell wall biogenesis; peptidoglycan biosynthesis. Its function is as follows. Cell wall formation. In Corynebacterium diphtheriae (strain ATCC 700971 / NCTC 13129 / Biotype gravis), this protein is UDP-N-acetylmuramate--L-alanine ligase.